A 609-amino-acid polypeptide reads, in one-letter code: NURS complex subunit pir2 (609 aa).

Basic and acidic residues predominate over residues 1–25 (MSEVHQESEVEYSRWKRERSPERSQ). 2 disordered regions span residues 1-60 (MSEV…RASG) and 187-210 (EKPS…QLSK). A compositionally biased stretch (low complexity) spans 27 to 36 (RSQSPPGEQS). Phosphoserine occurs at positions 28 and 30. A compositionally biased stretch (basic and acidic residues) spans 37–57 (AYHRERSPLRKRGNYYDDRTR). The segment covering 201 to 210 (LPSNDPQLSK) has biased composition (polar residues). The C2H2-type zinc finger occupies 474-499 (YRCHVGTCAKLFLGPEFVRKHINKKH).

It belongs to the ARS2 family. In terms of assembly, interacts with ccr4.

It is found in the nucleus. This chain is NURS complex subunit pir2, found in Schizosaccharomyces pombe (strain 972 / ATCC 24843) (Fission yeast).